Consider the following 639-residue polypeptide: Probable potassium transport system protein Kup 1 (639 aa).

12 helical membrane-spanning segments follow: residues Ala-27–Phe-47, Val-64–Ile-84, Val-115–Pro-135, Pro-151–Ile-171, Phe-182–Ile-202, Gly-225–Leu-245, Trp-261–Leu-281, Leu-293–Ile-313, Ile-351–Phe-371, Leu-377–Phe-397, Ile-408–Ala-428, and Leu-430–Ile-450.

The protein belongs to the HAK/KUP transporter (TC 2.A.72) family.

It is found in the cell inner membrane. The catalysed reaction is K(+)(in) + H(+)(in) = K(+)(out) + H(+)(out). In terms of biological role, transport of potassium into the cell. Likely operates as a K(+):H(+) symporter. The protein is Probable potassium transport system protein Kup 1 of Agrobacterium fabrum (strain C58 / ATCC 33970) (Agrobacterium tumefaciens (strain C58)).